The sequence spans 1202 residues: Protein HASTY 1 (1202 aa).

An N-acetylmethionine modification is found at M1.

The protein belongs to the exportin family. In terms of assembly, interacts with RAN1. As to expression, expressed in roots, leaves and floral buds.

Its subcellular location is the nucleus. In terms of biological role, nucleocytoplasmic transporter involved in the nuclear export of microRNAs (miRNAs). Required for several miRNAs accumulation. Specifically required for miR156 accumulation which targets SPL3, SPL4 and SPL5 transcription factors. Involved in plant development through its role in miRNAs processing. Required for vegetative phase change and vegetative to reproductive phase transition. Functionally dependent on RAN1 binding. Does not seem to be involved in small interfering RNAs (siRNAs) processing. In Arabidopsis thaliana (Mouse-ear cress), this protein is Protein HASTY 1 (HST1).